The chain runs to 627 residues: (-)-alpha-pinene synthase 2, chloroplastic (627 aa).

The transit peptide at 1–36 (MALVSIAPLASKSCLHKSLSSSAHELKTICRTIPTL) directs the protein to the chloroplast. The Mg(2+) site is built by Asp378, Asp382, and Asp530. A DDXXD motif motif is present at residues 378–382 (DDMYD).

Belongs to the terpene synthase family. Tpsd subfamily. Requires Mg(2+) as cofactor. The cofactor is Mn(2+).

It localises to the plastid. It is found in the chloroplast. It carries out the reaction (2E)-geranyl diphosphate = (1S,5S)-beta-pinene + diphosphate. The enzyme catalyses (2E)-geranyl diphosphate = (1S,5S)-alpha-pinene + diphosphate. The protein operates within terpene metabolism; oleoresin biosynthesis. Functionally, terpene synthase (TPS) involved in the biosynthesis of monoterpene natural products included in conifer oleoresin secretions and volatile emissions; these compounds contribute to biotic and abiotic stress defense against herbivores and pathogens. Catalyzes the conversion of (2E)-geranyl diphosphate (GPP) to (1S,5S)-beta-pinene. The protein is (-)-alpha-pinene synthase 2, chloroplastic of Picea glauca (White spruce).